The chain runs to 148 residues: Macrodomain Ter protein (148 aa).

This sequence belongs to the MatP family. Homodimer.

It localises to the cytoplasm. In terms of biological role, required for spatial organization of the terminus region of the chromosome (Ter macrodomain) during the cell cycle. Prevents early segregation of duplicated Ter macrodomains during cell division. Binds specifically to matS, which is a 13 bp signature motif repeated within the Ter macrodomain. The chain is Macrodomain Ter protein from Haemophilus influenzae (strain 86-028NP).